We begin with the raw amino-acid sequence, 325 residues long: Biotin synthase (325 aa).

In terms of domain architecture, Radical SAM core spans 46–270; the sequence is NNSNNIDLCS…IAICKLILPN (225 aa). Positions 64, 68, and 71 each coordinate [4Fe-4S] cluster. Ser-107, Cys-139, Cys-198, and Arg-274 together coordinate [2Fe-2S] cluster.

Belongs to the radical SAM superfamily. Biotin synthase family. Homodimer. It depends on [4Fe-4S] cluster as a cofactor. Requires [2Fe-2S] cluster as cofactor.

The catalysed reaction is (4R,5S)-dethiobiotin + (sulfur carrier)-SH + 2 reduced [2Fe-2S]-[ferredoxin] + 2 S-adenosyl-L-methionine = (sulfur carrier)-H + biotin + 2 5'-deoxyadenosine + 2 L-methionine + 2 oxidized [2Fe-2S]-[ferredoxin]. Its pathway is cofactor biosynthesis; biotin biosynthesis; biotin from 7,8-diaminononanoate: step 2/2. Catalyzes the conversion of dethiobiotin (DTB) to biotin by the insertion of a sulfur atom into dethiobiotin via a radical-based mechanism. This chain is Biotin synthase, found in Methanococcus aeolicus (strain ATCC BAA-1280 / DSM 17508 / OCM 812 / Nankai-3).